A 45-amino-acid polypeptide reads, in one-letter code: C-phycocyanin beta subunit (45 aa).

The protein belongs to the phycobiliprotein family. As to quaternary structure, heterodimer of an alpha and a beta subunit. The hererodimer further assembles into trimers and the trimers into hexamers. Post-translationally, contains two covalently linked bilin chromophores.

It is found in the cellular thylakoid membrane. Its function is as follows. Light-harvesting photosynthetic bile pigment-protein from the phycobiliprotein complex (phycobilisome, PBS). Phycocyanin is the major phycobiliprotein in the PBS rod. This is C-phycocyanin beta subunit (cpcB) from Limnospira fusiformis (Arthrospira fusiformis).